The chain runs to 484 residues: Adenylosuccinate lyase (484 aa).

The residue at position 2 (Ala2) is an N-acetylalanine. Substrate-binding positions include 20–21, 85–87, and 111–112; these read RY, RHD, and TS. Lys147 carries the N6-acetyllysine modification. Catalysis depends on His159, which acts as the Proton donor/acceptor. Gln241 serves as a coordination point for substrate. Catalysis depends on Ser289, which acts as the Proton donor/acceptor. Lys295 is modified (N6-acetyllysine). Residues Arg303, Arg329, Ser334, and Arg338 each coordinate substrate. A Glycyl lysine isopeptide (Lys-Gly) (interchain with G-Cter in SUMO1) cross-link involves residue Lys415.

The protein belongs to the lyase 1 family. Adenylosuccinate lyase subfamily. As to quaternary structure, homotetramer. Residues from neighboring subunits contribute catalytic and substrate-binding residues to each active site.

It carries out the reaction N(6)-(1,2-dicarboxyethyl)-AMP = fumarate + AMP. The catalysed reaction is (2S)-2-[5-amino-1-(5-phospho-beta-D-ribosyl)imidazole-4-carboxamido]succinate = 5-amino-1-(5-phospho-beta-D-ribosyl)imidazole-4-carboxamide + fumarate. The protein operates within purine metabolism; AMP biosynthesis via de novo pathway; AMP from IMP: step 2/2. It functions in the pathway purine metabolism; IMP biosynthesis via de novo pathway; 5-amino-1-(5-phospho-D-ribosyl)imidazole-4-carboxamide from 5-amino-1-(5-phospho-D-ribosyl)imidazole-4-carboxylate: step 2/2. Functionally, catalyzes two non-sequential steps in de novo AMP synthesis: converts (S)-2-(5-amino-1-(5-phospho-D-ribosyl)imidazole-4-carboxamido)succinate (SAICAR) to fumarate plus 5-amino-1-(5-phospho-D-ribosyl)imidazole-4-carboxamide, and thereby also contributes to de novo IMP synthesis, and converts succinyladenosine monophosphate (SAMP) to AMP and fumarate. This chain is Adenylosuccinate lyase (ADSL), found in Macaca fascicularis (Crab-eating macaque).